Reading from the N-terminus, the 829-residue chain is Periplasmic nitrate reductase (829 aa).

The N-terminal stretch at 1–30 (MNSPRPTPPPFAAAAAGLPILVRASNLVTE) is a signal peptide. The 57-residue stretch at 36–92 (LVWNKAPCRFCGTGCSVMVATRDGQVVATHGDIKAEVNRGINCVKGYFLSKIMYGSD) folds into the 4Fe-4S Mo/W bis-MGD-type domain. The [4Fe-4S] cluster site is built by C43, C46, C50, and C78. Mo-bis(molybdopterin guanine dinucleotide) contacts are provided by residues K80, Q147, N172, C176, 209–216 (WGSNMAEM), 240–244 (STFEH), 259–261 (QTD), M370, Q374, N480, 506–507 (SD), K529, D556, and 716–725 (TGRVLEHWHT). Residue F792 coordinates substrate. Residues N800 and K817 each contribute to the Mo-bis(molybdopterin guanine dinucleotide) site.

The protein belongs to the prokaryotic molybdopterin-containing oxidoreductase family. NasA/NapA/NarB subfamily. Component of the periplasmic nitrate reductase NapAB complex composed of NapA and NapB. [4Fe-4S] cluster is required as a cofactor. It depends on Mo-bis(molybdopterin guanine dinucleotide) as a cofactor.

The protein resides in the periplasm. It carries out the reaction 2 Fe(II)-[cytochrome] + nitrate + 2 H(+) = 2 Fe(III)-[cytochrome] + nitrite + H2O. Its function is as follows. Catalytic subunit of the periplasmic nitrate reductase complex NapAB. Receives electrons from NapB and catalyzes the reduction of nitrate to nitrite. The sequence is that of Periplasmic nitrate reductase from Pseudomonas aeruginosa (strain ATCC 15692 / DSM 22644 / CIP 104116 / JCM 14847 / LMG 12228 / 1C / PRS 101 / PAO1).